The following is a 400-amino-acid chain: Enoyl-[acyl-carrier-protein] reductase [NADH] 2 (400 aa).

NAD(+)-binding positions include 48–53 (GASSGF), 75–76 (FE), 112–113 (DA), and 141–142 (LA). Residue Y227 participates in substrate binding. Residue Y237 is the Proton donor of the active site. NAD(+)-binding positions include K246 and 275–277 (LVT).

It belongs to the TER reductase family. As to quaternary structure, monomer.

It catalyses the reaction a 2,3-saturated acyl-[ACP] + NAD(+) = a (2E)-enoyl-[ACP] + NADH + H(+). It functions in the pathway lipid metabolism; fatty acid biosynthesis. Its function is as follows. Involved in the final reduction of the elongation cycle of fatty acid synthesis (FAS II). Catalyzes the reduction of a carbon-carbon double bond in an enoyl moiety that is covalently linked to an acyl carrier protein (ACP). This Photobacterium profundum (strain SS9) protein is Enoyl-[acyl-carrier-protein] reductase [NADH] 2.